Here is a 107-residue protein sequence, read N- to C-terminus: MSTAELAVSYAALILADDGIEVSADKIQTILGAAKVQEVEPIWATIFAKALEGKDIKEILTNVGSAGPATAGAPAAAGAAAPAEEKKEEKEEEKEESDEDMGFGLFD.

Residues 68–82 are compositionally biased toward low complexity; the sequence is PATAGAPAAAGAAAP. Positions 68–107 are disordered; the sequence is PATAGAPAAAGAAAPAEEKKEEKEEEKEESDEDMGFGLFD. The segment covering 90–101 has biased composition (acidic residues); sequence KEEEKEESDEDM.

The protein belongs to the eukaryotic ribosomal protein P1/P2 family. In terms of assembly, P1 and P2 exist as dimers at the large ribosomal subunit.

Its subcellular location is the cytoplasm. In terms of biological role, plays an important role in the elongation step of protein synthesis. The protein is Large ribosomal subunit protein P1 of Penicillium brevicompactum.